Consider the following 22-residue polypeptide: Chymotrypsin inhibitor (22 aa).

The tract at residues 1–22 (FDESFGFQGPSTYEKTPLGEPA) is disordered.

In terms of tissue distribution, hemolymph.

It is found in the secreted. The protein resides in the extracellular space. Its function is as follows. Inhibits chymotrypsin stoichiometrically. Also inhibits porcine pancreatic elastase and trypsin. The sequence is that of Chymotrypsin inhibitor from Mythimna unipuncta (Armyworm moth).